We begin with the raw amino-acid sequence, 281 residues long: MAGSPELVVLDPPWDKELAAGTESQALVSATPREDFRVRCTSKRAVTEMLQLCGRFVQKLGDALPEEIREPALRDAQWTFESAVQENISINGQAWQEASDNCFMDSDIKVLEDQFDEIIVDIATKRKQYPRKILECVIKTIKAKQEILKQYHPVVHPLDLKYDPDPAPHMENLKCRGETVAKEISEAMKSLPALIEQGEGFSQVLRMQPVIHLQRIHQEVFSSCHRKPDAKPENFITQIETTPTETASRKTSDMVLKRKQTKDCPQRKWYPLRPKKINLDT.

S4 carries the post-translational modification Phosphoserine. Residue T244 is modified to Phosphothreonine.

As to quaternary structure, component of the MIS12 complex composed of MIS12, DSN1, NSL1/DC8 and PMF1. Interacts with KNL1.

It is found in the nucleus. Its subcellular location is the chromosome. The protein resides in the centromere. It localises to the kinetochore. Functionally, part of the MIS12 complex which is required for normal chromosome alignment and segregation and kinetochore formation during mitosis. This chain is Kinetochore-associated protein NSL1 homolog (NSL1), found in Homo sapiens (Human).